The chain runs to 660 residues: Arginine--tRNA ligase, cytoplasmic (660 aa).

Residue Met-1 is modified to N-acetylmethionine. Residues Met-1–Thr-72 are could be involved in the assembly of the multisynthetase complex. L-arginine is bound by residues Ser-200–Asn-202, His-211, Tyr-384, Asp-388, and Gln-412. The 'HIGH' region motif lies at Pro-201 to Leu-212. The segment at Asn-529–Ser-543 is interaction with tRNA.

This sequence belongs to the class-I aminoacyl-tRNA synthetase family. In terms of assembly, interacts (via N-terminus) with AIMP1 (via N-terminus); this stimulates its catalytic activity. Interacts (via N-terminus) with LARS2 (via C-terminus). Monomer. Part of a multisubunit complex that groups tRNA ligases for Arg (RARS1), Asp (DARS1), Gln (QARS1), Ile (IARS1), Leu (LARS1), Lys (KARS1), Met (MARS1) the bifunctional ligase for Glu and Pro (EPRS1) and the auxiliary subunits AIMP1/p43, AIMP2/p38 and EEF1E1/p18. Interacts with QARS1. Part of a complex composed of RARS1, QARS1 and AIMP1.

It is found in the cytoplasm. Its subcellular location is the cytosol. The catalysed reaction is tRNA(Arg) + L-arginine + ATP = L-arginyl-tRNA(Arg) + AMP + diphosphate. Its function is as follows. Forms part of a macromolecular complex that catalyzes the attachment of specific amino acids to cognate tRNAs during protein synthesis. Modulates the secretion of AIMP1 and may be involved in generation of the inflammatory cytokine EMAP2 from AIMP1. The protein is Arginine--tRNA ligase, cytoplasmic (RARS1) of Bos taurus (Bovine).